The sequence spans 382 residues: 26S proteasome non-ATPase regulatory subunit 6 (382 aa).

Residues Gln186–Ala354 enclose the PCI domain.

Belongs to the proteasome subunit S10 family.

In terms of biological role, acts as a regulatory subunit of the 26S proteasome which is involved in the ATP-dependent degradation of ubiquitinated proteins. The polypeptide is 26S proteasome non-ATPase regulatory subunit 6 (psmD6) (Dictyostelium discoideum (Social amoeba)).